We begin with the raw amino-acid sequence, 434 residues long: Zinc finger and BTB domain-containing protein 8A (434 aa).

One can recognise a BTB domain in the interval 24–92; that stretch reads CDCSILVEGK…VYSGKLSLTG (69 aa). Residues 134–238 are disordered; that stretch reads SLSDKDTGSN…SGNHVSQSEE (105 aa). Phosphoserine is present on residues Ser-161 and Ser-167. Glycyl lysine isopeptide (Lys-Gly) (interchain with G-Cter in SUMO2) cross-links involve residues Lys-172, Lys-176, and Lys-193. The span at 192 to 202 shows a compositional bias: basic and acidic residues; it reads AKHEQRKEPSK. A compositionally biased stretch (polar residues) spans 226-238; sequence QTDSGNHVSQSEE. 2 C2H2-type zinc fingers span residues 275–297 and 303–326; these read FKCPFCTHVVKRKADLKRHLRCH and YPCQACGKRFSRLDHLSSHFRTIH. A Glycyl lysine isopeptide (Lys-Gly) (interchain with G-Cter in SUMO2) cross-link involves residue Lys-430.

The protein resides in the nucleus. Functionally, may be involved in transcriptional regulation. In Mus musculus (Mouse), this protein is Zinc finger and BTB domain-containing protein 8A (Zbtb8a).